Reading from the N-terminus, the 129-residue chain is S-adenosylmethionine decarboxylase proenzyme (129 aa).

The Schiff-base intermediate with substrate; via pyruvic acid role is filled by Ser-63. Ser-63 is subject to Pyruvic acid (Ser); by autocatalysis. His-68 functions as the Proton acceptor; for processing activity in the catalytic mechanism. The active-site Proton donor; for catalytic activity is the Cys-83.

This sequence belongs to the prokaryotic AdoMetDC family. Type 1 subfamily. As to quaternary structure, heterotetramer of two alpha and two beta chains arranged as a dimer of alpha/beta heterodimers. Pyruvate is required as a cofactor. In terms of processing, is synthesized initially as an inactive proenzyme. Formation of the active enzyme involves a self-maturation process in which the active site pyruvoyl group is generated from an internal serine residue via an autocatalytic post-translational modification. Two non-identical subunits are generated from the proenzyme in this reaction, and the pyruvate is formed at the N-terminus of the alpha chain, which is derived from the carboxyl end of the proenzyme. The post-translation cleavage follows an unusual pathway, termed non-hydrolytic serinolysis, in which the side chain hydroxyl group of the serine supplies its oxygen atom to form the C-terminus of the beta chain, while the remainder of the serine residue undergoes an oxidative deamination to produce ammonia and the pyruvoyl group blocking the N-terminus of the alpha chain.

It carries out the reaction S-adenosyl-L-methionine + H(+) = S-adenosyl 3-(methylsulfanyl)propylamine + CO2. It functions in the pathway amine and polyamine biosynthesis; S-adenosylmethioninamine biosynthesis; S-adenosylmethioninamine from S-adenosyl-L-methionine: step 1/1. Functionally, catalyzes the decarboxylation of S-adenosylmethionine to S-adenosylmethioninamine (dcAdoMet), the propylamine donor required for the synthesis of the polyamines spermine and spermidine from the diamine putrescine. This Shouchella clausii (strain KSM-K16) (Alkalihalobacillus clausii) protein is S-adenosylmethionine decarboxylase proenzyme.